We begin with the raw amino-acid sequence, 544 residues long: Esterase P (544 aa).

The signal sequence occupies residues 1 to 19 (MSIFKRLLCLTLLWIAALE). Asn-75 carries an N-linked (GlcNAc...) asparagine glycan. Cys-83 and Cys-102 are disulfide-bonded. N-linked (GlcNAc...) asparagine glycosylation is present at Asn-114. The Acyl-ester intermediate role is filled by Ser-206. Residues Cys-258 and Cys-270 are joined by a disulfide bond. Residues Asn-262 and Asn-456 are each glycosylated (N-linked (GlcNAc...) asparagine). Catalysis depends on His-466, which acts as the Charge relay system. The cysteines at positions 514 and 535 are disulfide-linked.

It belongs to the type-B carboxylesterase/lipase family. Monomer.

It is found in the secreted. It catalyses the reaction a carboxylic ester + H2O = an alcohol + a carboxylate + H(+). The polypeptide is Esterase P (Est-P) (Drosophila melanogaster (Fruit fly)).